We begin with the raw amino-acid sequence, 290 residues long: Forkhead box protein O3B (290 aa).

Disordered regions lie at residues 1–30 (METDLAEMPEKGVLSSQDSPHFQEKSTEEG) and 44–239 (AAAA…SSRR). Low complexity-rich tracts occupy residues 44 to 59 (AAAAAAPGSRSLRGVH) and 75 to 91 (RTPAAAGRAAKMAEAPA). The residue at position 117 (Thr117) is a Phosphothreonine; by PKB/AKT1. Acidic residues predominate over residues 142-153 (IPEEEDDEDDED). The segment at residues 242 to 290 (WGNLSYADLITRAIESSPDRRLTLSQIYEWMVSCVPYFKDKGNSNSSAG) is a DNA-binding region (fork-head).

The protein localises to the cytoplasm. It localises to the cytosol. Its function is as follows. Transcription factor. The protein is Forkhead box protein O3B of Homo sapiens (Human).